A 410-amino-acid chain; its full sequence is Gamma-glutamyl phosphate reductase (410 aa).

Belongs to the gamma-glutamyl phosphate reductase family.

It is found in the cytoplasm. The enzyme catalyses L-glutamate 5-semialdehyde + phosphate + NADP(+) = L-glutamyl 5-phosphate + NADPH + H(+). The protein operates within amino-acid biosynthesis; L-proline biosynthesis; L-glutamate 5-semialdehyde from L-glutamate: step 2/2. In terms of biological role, catalyzes the NADPH-dependent reduction of L-glutamate 5-phosphate into L-glutamate 5-semialdehyde and phosphate. The product spontaneously undergoes cyclization to form 1-pyrroline-5-carboxylate. This chain is Gamma-glutamyl phosphate reductase, found in Campylobacter jejuni subsp. jejuni serotype O:2 (strain ATCC 700819 / NCTC 11168).